The primary structure comprises 414 residues: Phosphoglycerate kinase (414 aa).

Substrate-binding positions include 20-22 (DIN), Arg-37, 60-63 (HQSR), Arg-117, and Arg-164. Residues Glu-338 and 364–367 (GGHL) contribute to the ATP site.

Belongs to the phosphoglycerate kinase family. In terms of assembly, monomer.

It localises to the cytoplasm. The catalysed reaction is (2R)-3-phosphoglycerate + ATP = (2R)-3-phospho-glyceroyl phosphate + ADP. Its pathway is carbohydrate degradation; glycolysis; pyruvate from D-glyceraldehyde 3-phosphate: step 2/5. In Methanococcus maripaludis (strain DSM 14266 / JCM 13030 / NBRC 101832 / S2 / LL), this protein is Phosphoglycerate kinase.